Reading from the N-terminus, the 421-residue chain is Large ribosomal subunit protein uL4 (421 aa).

At Ala-2 the chain carries N-acetylalanine. Lys-14 bears the N6-acetyllysine mark. Position 97 is an omega-N-methylarginine (Arg-97). Residue Lys-106 is modified to N6-acetyllysine. Lys-239 is covalently cross-linked (Glycyl lysine isopeptide (Lys-Gly) (interchain with G-Cter in SUMO2)). Lys-259 carries the post-translational modification N6-acetyllysine. Thr-266 is subject to Phosphothreonine. Residue Ser-290 is modified to Phosphoserine. Citrulline is present on Arg-300. Lys-327 is covalently cross-linked (Glycyl lysine isopeptide (Lys-Gly) (interchain with G-Cter in SUMO2)). 2 positions are modified to N6-acetyllysine: Lys-333 and Lys-353. The tract at residues 359 to 421 (EAKSEEKGVP…PTTEEKKPAA (63 aa)) is disordered. N6-acetyllysine; alternate is present on Lys-361. Lys-361 participates in a covalent cross-link: Glycyl lysine isopeptide (Lys-Gly) (interchain with G-Cter in SUMO1); alternate. Ser-362 is modified (phosphoserine). Residues 368–391 (PGKKPRRKKGKKTVGVKKPKKPVV) are compositionally biased toward basic residues. Residues 401–421 (PAADKKPAEKKPTTEEKKPAA) show a composition bias toward basic and acidic residues.

It belongs to the universal ribosomal protein uL4 family. As to quaternary structure, component of the large ribosomal subunit. May bind IPO9 with low affinity. Interacts with RBM3. In terms of processing, citrullinated by PADI4.

The protein localises to the cytoplasm. Its function is as follows. Component of the large ribosomal subunit. The ribosome is a large ribonucleoprotein complex responsible for the synthesis of proteins in the cell. The polypeptide is Large ribosomal subunit protein uL4 (RPL4) (Canis lupus familiaris (Dog)).